The chain runs to 806 residues: Phenylalanine--tRNA ligase beta subunit (806 aa).

Positions 40–153 (FNSPDYLQLA…ADAIIIDHVS (114 aa)) constitute a tRNA-binding domain. Residues 413-487 (PFSKKLTVNF…KLIDINKLKP (75 aa)) form the B5 domain. Mg(2+)-binding residues include D465, D471, E474, and E475.

Belongs to the phenylalanyl-tRNA synthetase beta subunit family. Type 1 subfamily. Tetramer of two alpha and two beta subunits. Requires Mg(2+) as cofactor.

It localises to the cytoplasm. It catalyses the reaction tRNA(Phe) + L-phenylalanine + ATP = L-phenylalanyl-tRNA(Phe) + AMP + diphosphate + H(+). This Mycoplasma genitalium (strain ATCC 33530 / DSM 19775 / NCTC 10195 / G37) (Mycoplasmoides genitalium) protein is Phenylalanine--tRNA ligase beta subunit (pheT).